Reading from the N-terminus, the 304-residue chain is Homoserine O-acetyltransferase (304 aa).

Cys-142 functions as the Acyl-thioester intermediate in the catalytic mechanism. Residues Lys-163 and Ser-191 each coordinate substrate. The Proton acceptor role is filled by His-234. The active site involves Glu-236. Substrate is bound at residue Arg-248.

It belongs to the MetA family.

The protein localises to the cytoplasm. The enzyme catalyses L-homoserine + acetyl-CoA = O-acetyl-L-homoserine + CoA. It functions in the pathway amino-acid biosynthesis; L-methionine biosynthesis via de novo pathway; O-acetyl-L-homoserine from L-homoserine: step 1/1. Functionally, transfers an acetyl group from acetyl-CoA to L-homoserine, forming acetyl-L-homoserine. The chain is Homoserine O-acetyltransferase from Thermotoga neapolitana (strain ATCC 49049 / DSM 4359 / NBRC 107923 / NS-E).